The sequence spans 792 residues: Ribosome biogenesis protein BOP1 homolog (792 aa).

Residues 1-11 (MTKKRTVKRKV) are compositionally biased toward basic residues. Residues 1–167 (MTKKRTVKRK…ESDTSDEEDI (167 aa)) are disordered. Composition is skewed to acidic residues over residues 44-53 (EDTTDDEGID), 60-72 (SSED…DEEG), 82-117 (EAEE…ESDA), and 157-166 (EESDTSDEED). 7 WD repeats span residues 453-494 (GHTD…RTIE), 496-534 (NDVV…KLLI), 578-620 (THFK…SQIP), 623-661 (KSKG…LIKK), 664-703 (TNSK…KPYQ), 707-746 (LHRN…DLLQ), and 762-792 (RDEF…RLYT).

This sequence belongs to the WD repeat BOP1/ERB1 family.

It is found in the nucleus. It localises to the nucleolus. The protein resides in the nucleoplasm. Functionally, required for maturation of ribosomal RNAs and formation of the large ribosomal subunit. The protein is Ribosome biogenesis protein BOP1 homolog of Drosophila mojavensis (Fruit fly).